We begin with the raw amino-acid sequence, 273 residues long: Coiled-coil domain-containing protein 122 (273 aa).

The span at 1 to 17 shows a compositional bias: basic and acidic residues; that stretch reads MSDNKERKSQGFPKEDN. Positions 1-39 are disordered; that stretch reads MSDNKERKSQGFPKEDNQDTSSLADAVEKVAKQQQSQAS. Coiled coils occupy residues 24-116 and 179-269; these read ADAV…TAQE and NRIT…RKCI.

This Homo sapiens (Human) protein is Coiled-coil domain-containing protein 122 (CCDC122).